The chain runs to 654 residues: Probable potassium transport system protein Kup (654 aa).

Transmembrane regions (helical) follow at residues 17-37 (GILVTLGIIYGDIGTSPLYVM), 40-60 (IIGLHTIKPEVVLGGISAIFW), 71-91 (VLITLSADNHGEGGIFALYAL), 99-119 (WLIIPAIIGGSALLADGIITP), 137-157 (INTVPIVIAILVVLFTIQQFG), 164-184 (FFAPMMMIWFAMLAILGILQI), 202-222 (LLSIHPDGFYVLGFVFLCTTG), 240-260 (ISWIFVKIALLLNYFGQGAYL), 281-301 (LVMPEWFQPFGIVISTMAAVI), 338-358 (IYIPSINWLLLAGCIGIVLHF), 369-389 (GLAIVLCMIMTTILLTYFMIL), 394-414 (WFIIAPLILLYLVIEFSFLIA), and 423-443 (GYVTLIIASALTFIMSIWYTA).

The protein belongs to the HAK/KUP transporter (TC 2.A.72) family.

The protein resides in the cell inner membrane. It carries out the reaction K(+)(in) + H(+)(in) = K(+)(out) + H(+)(out). Its function is as follows. Transport of potassium into the cell. Likely operates as a K(+):H(+) symporter. The sequence is that of Probable potassium transport system protein Kup from Flavobacterium psychrophilum (strain ATCC 49511 / DSM 21280 / CIP 103535 / JIP02/86).